A 464-amino-acid chain; its full sequence is tRNA modification GTPase MnmE (464 aa).

(6S)-5-formyl-5,6,7,8-tetrahydrofolate is bound by residues Arg-29, Glu-91, and Arg-131. In terms of domain architecture, TrmE-type G spans 226–387 (GLKVALAGKP…LINYLLKKCG (162 aa)). Asn-236 lines the K(+) pocket. GTP is bound by residues 236–241 (NVGKSS), 255–261 (TDLPGTT), and 280–283 (DTAG). Position 240 (Ser-240) interacts with Mg(2+). Positions 255, 257, and 260 each coordinate K(+). Thr-261 is a Mg(2+) binding site. Lys-464 contributes to the (6S)-5-formyl-5,6,7,8-tetrahydrofolate binding site.

The protein belongs to the TRAFAC class TrmE-Era-EngA-EngB-Septin-like GTPase superfamily. TrmE GTPase family. Homodimer. Heterotetramer of two MnmE and two MnmG subunits. It depends on K(+) as a cofactor.

It is found in the cytoplasm. Exhibits a very high intrinsic GTPase hydrolysis rate. Involved in the addition of a carboxymethylaminomethyl (cmnm) group at the wobble position (U34) of certain tRNAs, forming tRNA-cmnm(5)s(2)U34. The sequence is that of tRNA modification GTPase MnmE from Prochlorococcus marinus (strain NATL1A).